The primary structure comprises 205 residues: Golgi apparatus membrane protein TVP23 homolog B (205 aa).

M1 is modified (N-acetylmethionine). The segment covering 1–21 has biased composition (acidic residues); it reads MLSQDSNDDTEDVSLFDAEEE. A disordered region spans residues 1–27; that stretch reads MLSQDSNDDTEDVSLFDAEEETTNRPR. The next 4 helical transmembrane spans lie at 34-53, 54-72, 126-146, and 152-172; these read PVASFFHLFFRVSAVVVYLL, CELLSSSFIACMVTIILLL, IFWLGLIACPVLWVIFAFSAL, and KWLAVVIMGVVLQGANLYGYI.

It belongs to the TVP23 family.

It is found in the membrane. The chain is Golgi apparatus membrane protein TVP23 homolog B (Tvp23b) from Mus musculus (Mouse).